The following is a 356-amino-acid chain: S-adenosylmethionine:tRNA ribosyltransferase-isomerase (356 aa).

It belongs to the QueA family. Monomer.

Its subcellular location is the cytoplasm. The catalysed reaction is 7-aminomethyl-7-carbaguanosine(34) in tRNA + S-adenosyl-L-methionine = epoxyqueuosine(34) in tRNA + adenine + L-methionine + 2 H(+). The protein operates within tRNA modification; tRNA-queuosine biosynthesis. Its function is as follows. Transfers and isomerizes the ribose moiety from AdoMet to the 7-aminomethyl group of 7-deazaguanine (preQ1-tRNA) to give epoxyqueuosine (oQ-tRNA). This chain is S-adenosylmethionine:tRNA ribosyltransferase-isomerase, found in Yersinia pseudotuberculosis serotype IB (strain PB1/+).